The following is a 764-amino-acid chain: Polyadenylate-binding protein, cytoplasmic and nuclear (764 aa).

The segment at 36–56 (VPEAQAEGAEAAPTPTAAPHP) is disordered. RRM domains lie at 60–138 (ASLY…WSQR), 148–225 (GNIF…HHIP), 241–318 (TNVY…RAQK), and 344–462 (VNLY…LAQR). 2 disordered regions span residues 375–420 (VMRD…GDRK) and 587–634 (GRGG…PRGN). 2 stretches are compositionally biased toward basic and acidic residues: residues 387–399 (KDEK…KEGE) and 408–420 (GSEK…GDRK). Gly residues predominate over residues 587 to 596 (GRGGPAGRGP). The segment covering 597–613 (QGIPAGIPQGLQGGPAV) has biased composition (low complexity). The 78-residue stretch at 657–734 (GSFLQAQLAT…ALAVYDEYLK (78 aa)) folds into the PABC domain. Positions 735–745 (TQGQQPTQQPA) are enriched in polar residues. The segment at 735–764 (TQGQQPTQQPAEANGEQPKAEEQKPEEQKA) is disordered. Positions 752-764 (PKAEEQKPEEQKA) are enriched in basic and acidic residues.

Belongs to the polyadenylate-binding protein type-1 family.

Its subcellular location is the cytoplasm. The protein localises to the nucleus. In terms of biological role, binds the poly(A) tail of mRNA. Appears to be an important mediator of the multiple roles of the poly(A) tail in mRNA biogenesis, stability and translation. In the nucleus, involved in both mRNA cleavage and polyadenylation. Is also required for efficient mRNA export to the cytoplasm. Acts in concert with a poly(A)-specific nuclease (PAN) to affect poly(A) tail shortening, which may occur concomitantly with either nucleocytoplasmic mRNA transport or translational initiation. In the cytoplasm, stimulates translation initiation and regulates mRNA decay through translation termination-coupled poly(A) shortening, probably mediated by PAN. The chain is Polyadenylate-binding protein, cytoplasmic and nuclear (pabp-1) from Neurospora crassa (strain ATCC 24698 / 74-OR23-1A / CBS 708.71 / DSM 1257 / FGSC 987).